The sequence spans 83 residues: Small ribosomal subunit protein eS21 (83 aa).

The protein belongs to the eukaryotic ribosomal protein eS21 family. In terms of assembly, component of the 40S small ribosomal subunit.

Its subcellular location is the cytoplasm. The protein localises to the cytosol. It is found in the rough endoplasmic reticulum. Its function is as follows. Component of the small ribosomal subunit. The ribosome is a large ribonucleoprotein complex responsible for the synthesis of proteins in the cell. This Xenopus tropicalis (Western clawed frog) protein is Small ribosomal subunit protein eS21 (rps21).